Here is a 204-residue protein sequence, read N- to C-terminus: Large ribosomal subunit protein eL15 (204 aa).

This sequence belongs to the eukaryotic ribosomal protein eL15 family.

The polypeptide is Large ribosomal subunit protein eL15 (RPL15) (Tetrahymena thermophila (strain SB210)).